Here is a 183-residue protein sequence, read N- to C-terminus: ATP-dependent protease subunit HslV (183 aa).

Residue Thr13 is part of the active site. 3 residues coordinate Na(+): Gly168, Cys171, and Thr174.

The protein belongs to the peptidase T1B family. HslV subfamily. As to quaternary structure, a double ring-shaped homohexamer of HslV is capped on each side by a ring-shaped HslU homohexamer. The assembly of the HslU/HslV complex is dependent on binding of ATP.

It localises to the cytoplasm. It carries out the reaction ATP-dependent cleavage of peptide bonds with broad specificity.. Its activity is regulated as follows. Allosterically activated by HslU binding. Its function is as follows. Protease subunit of a proteasome-like degradation complex believed to be a general protein degrading machinery. The sequence is that of ATP-dependent protease subunit HslV from Stenotrophomonas maltophilia (strain R551-3).